The sequence spans 248 residues: Ras-like protein family member 11B (248 aa).

Residues 29–246 are small GTPase-like; sequence AGRRLVKIAV…ALSAKVRTVT (218 aa). GTP contacts are provided by residues 40-47, 87-94, and 152-155; these read GASGVGKT, DTPGIQVH, and NKAD. The interval 205–226 is disordered; sequence QQPSSTPEKRRTSLIPRPKSPN.

It belongs to the small GTPase superfamily. Ras family. In terms of tissue distribution, widely expressed with highest levels in placenta and primary macrophages.

The catalysed reaction is GTP + H2O = GDP + phosphate + H(+). This is Ras-like protein family member 11B from Homo sapiens (Human).